The chain runs to 401 residues: Sorting nexin-4 (401 aa).

The PX domain maps to 17–139; that stretch reads FLQCLVTEPR…AFLENPNWNN (123 aa). Arg-60, Ser-62, Lys-86, and Arg-105 together coordinate a 1,2-diacyl-sn-glycero-3-phospho-(1D-myo-inositol-3-phosphate). Position 62 is a phosphoserine (Ser-62). Residues 190-292 adopt a coiled-coil conformation; the sequence is ISNLEGSIQK…DVEALQEYSA (103 aa).

The protein belongs to the sorting nexin family.

It is found in the cytoplasm. It localises to the cytosol. Its subcellular location is the preautophagosomal structure membrane. The protein localises to the endosome membrane. Functionally, sorting nexin, involved in the separation or division of vacuoles throughout the entire life cycle of the cells. Involved in retrieval of late-Golgi SNAREs from post-Golgi endosomes to the trans-Golgi network, for cytoplasm to vacuole transport (Cvt), and autophagy of large cargos including mitophagy, pexophagy and glycophagy. This Schizosaccharomyces pombe (strain 972 / ATCC 24843) (Fission yeast) protein is Sorting nexin-4 (snx4).